A 222-amino-acid chain; its full sequence is Putative serine proteinase inhibitor 2 homolog second part (222 aa).

The protein belongs to the serpin family. Poxviruses subfamily.

This Homo sapiens (Human) protein is Putative serine proteinase inhibitor 2 homolog second part.